A 114-amino-acid chain; its full sequence is Small ribosomal subunit protein bS6 (114 aa).

The protein belongs to the bacterial ribosomal protein bS6 family.

Functionally, binds together with bS18 to 16S ribosomal RNA. The chain is Small ribosomal subunit protein bS6 from Protochlamydia amoebophila (strain UWE25).